A 199-amino-acid chain; its full sequence is dTTP/UTP pyrophosphatase (199 aa).

The active-site Proton acceptor is the D78.

It belongs to the Maf family. YhdE subfamily. A divalent metal cation is required as a cofactor.

It is found in the cytoplasm. The enzyme catalyses dTTP + H2O = dTMP + diphosphate + H(+). The catalysed reaction is UTP + H2O = UMP + diphosphate + H(+). Its function is as follows. Nucleoside triphosphate pyrophosphatase that hydrolyzes dTTP and UTP. May have a dual role in cell division arrest and in preventing the incorporation of modified nucleotides into cellular nucleic acids. This chain is dTTP/UTP pyrophosphatase, found in Clostridium acetobutylicum (strain ATCC 824 / DSM 792 / JCM 1419 / IAM 19013 / LMG 5710 / NBRC 13948 / NRRL B-527 / VKM B-1787 / 2291 / W).